The chain runs to 89 residues: Small ribosomal subunit protein uS15 (89 aa).

This sequence belongs to the universal ribosomal protein uS15 family. As to quaternary structure, part of the 30S ribosomal subunit. Forms a bridge to the 50S subunit in the 70S ribosome, contacting the 23S rRNA.

In terms of biological role, one of the primary rRNA binding proteins, it binds directly to 16S rRNA where it helps nucleate assembly of the platform of the 30S subunit by binding and bridging several RNA helices of the 16S rRNA. Forms an intersubunit bridge (bridge B4) with the 23S rRNA of the 50S subunit in the ribosome. In Brevibacillus brevis (strain 47 / JCM 6285 / NBRC 100599), this protein is Small ribosomal subunit protein uS15.